A 1048-amino-acid chain; its full sequence is Self-sufficient cytochrome P450 monooxygenase CYP505E4 (1048 aa).

Cys405 is a heme binding site. Positions 499–640 constitute a Flavodoxin-like domain; that stretch reads VSFFYGSNSG…DLEVWEETNL (142 aa). FMN is bound by residues 505-509 and 584-616; these read SNSGT and VFGC…TRLA. Residues 678-906 enclose the FAD-binding FR-type domain; the sequence is RDLIEAKVTA…RPAKDAFHLP (229 aa).

In the N-terminal section; belongs to the cytochrome P450 family. The cofactor is FAD. It depends on FMN as a cofactor. Heme serves as cofactor.

It catalyses the reaction 2 oxidized [cytochrome P450] + NADPH = 2 reduced [cytochrome P450] + NADP(+) + H(+). The catalysed reaction is an organic molecule + reduced [NADPH--hemoprotein reductase] + O2 = an alcohol + oxidized [NADPH--hemoprotein reductase] + H2O + H(+). The enzyme catalyses dodecanoate + reduced [NADPH--hemoprotein reductase] + O2 = 5-hydroxydodecanoate + oxidized [NADPH--hemoprotein reductase] + H2O + H(+). It carries out the reaction tetradecanoate + reduced [NADPH--hemoprotein reductase] + O2 = 7-hydroxytetradecanoate + oxidized [NADPH--hemoprotein reductase] + H2O + H(+). It catalyses the reaction dodecan-1-ol + reduced [NADPH--hemoprotein reductase] + O2 = 1,5-dodecanediol + oxidized [NADPH--hemoprotein reductase] + H2O + H(+). The catalysed reaction is dodecan-1-ol + reduced [NADPH--hemoprotein reductase] + O2 = 1,4-dodecanediol + oxidized [NADPH--hemoprotein reductase] + H2O + H(+). The enzyme catalyses dodecan-1-ol + reduced [NADPH--hemoprotein reductase] + O2 = 1,6-dodecanediol + oxidized [NADPH--hemoprotein reductase] + H2O + H(+). Functionally, self-sufficient cytochrome P450 monooxygenase that catalyzes the regioselective in-chain hydroxylation of alkanes, fatty alcohols, and fatty acids at the omega-7 position. Performs hydroxylation of C10-C16 n-alkanes and C12 and C14 fatty alcohols; and thereby enables the one step biocatalytic synthesis of rare alcohols such as 5-dodecanol and 7-tetradecanol. Converts 1-dodecanol into 1,5-dodecanediol as major product with very little sub-terminally hydroxylated products with the 1,4-dodecanediol and 1,6-dodecanediol more abundant. Converts dodecanoic acid to 5-hydroxydodecanoic acid which can be further converted into delta-dodecalactone by lactonization of the 5-hydroxy acid at low pH. Also gives sub-terminal hydroxylation of dodecanoic acid with 9-hydroxydodecanoic acid being the second most abundant product. This chain is Self-sufficient cytochrome P450 monooxygenase CYP505E4, found in Penicillium expansum (Blue mold rot fungus).